A 675-amino-acid chain; its full sequence is Pescadillo homolog (675 aa).

The disordered stretch occupies residues 309 to 331 (AGLDEAKEEPAAETTEESSETID). The BRCT domain maps to 352-471 (EAGSLFAPFT…RLVRPDLYAP (120 aa)). Residues 475-675 (LPPHLSPWVK…RRKLEKGAAK (201 aa)) form a disordered region. A compositionally biased stretch (acidic residues) spans 498-518 (EQEEEGEAELDEDSDEEMEEA). Basic and acidic residues predominate over residues 519 to 530 (TSDKKAEAKADV). Acidic residues-rich tracts occupy residues 532–541 (SESEDEDESV) and 549–580 (GTDD…DEEE). The stretch at 551–675 (DDDESESEDE…RRKLEKGAAK (125 aa)) forms a coiled coil. Residues 581 to 591 (AARTQHQKELE) show a composition bias toward basic and acidic residues. Over residues 611–623 (KKASQAKKIAAKK) the composition is skewed to basic residues. Residues 624 to 634 (RKEEEELERQK) show a composition bias toward basic and acidic residues.

The protein belongs to the pescadillo family. As to quaternary structure, component of the NOP7 complex, composed of erb1, nop7 and ytm1. The complex is held together by erb1, which interacts with nop7 via its N-terminal domain and with ytm1 via a high-affinity interaction between the seven-bladed beta-propeller domains of the 2 proteins. The NOP7 complex associates with the 66S pre-ribosome.

It is found in the nucleus. Its subcellular location is the nucleolus. It localises to the nucleoplasm. Functionally, component of the NOP7 complex, which is required for maturation of the 25S and 5.8S ribosomal RNAs and formation of the 60S ribosome. The polypeptide is Pescadillo homolog (nop7) (Aspergillus fumigatus (strain CBS 144.89 / FGSC A1163 / CEA10) (Neosartorya fumigata)).